Here is a 208-residue protein sequence, read N- to C-terminus: GTP cyclohydrolase 1 (208 aa).

Zn(2+)-binding residues include cysteine 89, histidine 92, and cysteine 163.

Belongs to the GTP cyclohydrolase I family. Homomer.

It carries out the reaction GTP + H2O = 7,8-dihydroneopterin 3'-triphosphate + formate + H(+). The protein operates within cofactor biosynthesis; 7,8-dihydroneopterin triphosphate biosynthesis; 7,8-dihydroneopterin triphosphate from GTP: step 1/1. This is GTP cyclohydrolase 1 from Saccharolobus islandicus (strain Y.N.15.51 / Yellowstone #2) (Sulfolobus islandicus).